A 285-amino-acid chain; its full sequence is Nucleotide-binding protein in ptsN-ptsO intergenic region (285 aa).

ATP is bound at residue 8 to 15 (GRSGSGKS). Residue 60–63 (DARN) coordinates GTP.

Belongs to the RapZ-like family.

Its function is as follows. Displays ATPase and GTPase activities. This chain is Nucleotide-binding protein in ptsN-ptsO intergenic region, found in Stutzerimonas stutzeri (Pseudomonas stutzeri).